The following is a 184-amino-acid chain: Major urinary protein 3 (184 aa).

The first 22 residues, 1–22, serve as a signal peptide directing secretion; the sequence is MKLLLPLLLLLCLELTLVCIHA. The N-linked (GlcNAc...) asparagine glycan is linked to asparagine 66. Residues cysteine 86 and cysteine 179 are joined by a disulfide bond.

Belongs to the calycin superfamily. Lipocalin family. Glycosylated. Abundant in the urine of adult male mice but absent from that of females.

It is found in the secreted. Its function is as follows. Binds pheromones that are released from drying urine of males. These pheromones affect the sexual behavior of females. In Mus musculus (Mouse), this protein is Major urinary protein 3 (Mup3).